The primary structure comprises 348 residues: D-alanine--D-alanine ligase (348 aa).

The ATP-grasp domain maps to 136–344 (KSVFKSYNLP…LEKLVANLIE (209 aa)). An ATP-binding site is contributed by 171–226 (NKIISYPCFIKPANLGSSVGITKAYSKEEFIAGIEFAAKYDERIIVEKSIEGRELE). Mg(2+) is bound by residues Asp297, Glu311, and Asn313.

The protein belongs to the D-alanine--D-alanine ligase family. The cofactor is Mg(2+). Mn(2+) is required as a cofactor.

It is found in the cytoplasm. The enzyme catalyses 2 D-alanine + ATP = D-alanyl-D-alanine + ADP + phosphate + H(+). It functions in the pathway cell wall biogenesis; peptidoglycan biosynthesis. In terms of biological role, cell wall formation. The chain is D-alanine--D-alanine ligase from Prochlorococcus marinus (strain NATL2A).